The following is a 455-amino-acid chain: Serine--tRNA ligase (455 aa).

252–254 (TAE) contacts L-serine. ATP is bound by residues 283–285 (RKE) and valine 299. Glutamate 306 contacts L-serine. 370-373 (EVVS) contacts ATP. L-serine is bound at residue threonine 406.

This sequence belongs to the class-II aminoacyl-tRNA synthetase family. Type-1 seryl-tRNA synthetase subfamily. Homodimer. The tRNA molecule binds across the dimer.

Its subcellular location is the cytoplasm. The catalysed reaction is tRNA(Ser) + L-serine + ATP = L-seryl-tRNA(Ser) + AMP + diphosphate + H(+). The enzyme catalyses tRNA(Sec) + L-serine + ATP = L-seryl-tRNA(Sec) + AMP + diphosphate + H(+). The protein operates within aminoacyl-tRNA biosynthesis; selenocysteinyl-tRNA(Sec) biosynthesis; L-seryl-tRNA(Sec) from L-serine and tRNA(Sec): step 1/1. Catalyzes the attachment of serine to tRNA(Ser). Is also able to aminoacylate tRNA(Sec) with serine, to form the misacylated tRNA L-seryl-tRNA(Sec), which will be further converted into selenocysteinyl-tRNA(Sec). This is Serine--tRNA ligase from Thermococcus gammatolerans (strain DSM 15229 / JCM 11827 / EJ3).